We begin with the raw amino-acid sequence, 77 residues long: Conotoxin Lt7.1 (77 aa).

Residues 1–19 form the signal peptide; it reads MEKLTILLLVAALLMSTQG. A propeptide spanning residues 20–49 is cleaved from the precursor; the sequence is LIQSGGENRPKEKIKFLSKRKTVAESWWEG. Cystine bridges form between Cys-51/Cys-65, Cys-58/Cys-69, and Cys-64/Cys-74.

Belongs to the conotoxin O2 superfamily. As to expression, expressed by the venom duct.

The protein resides in the secreted. The protein is Conotoxin Lt7.1 of Conus litteratus (Lettered cone).